A 300-amino-acid chain; its full sequence is Ribosomal protein bS6--L-glutamate ligase (300 aa).

The region spanning 104-287 is the ATP-grasp domain; it reads MQLLARQGID…IAGKMIRWIE (184 aa). Residues Lys-141, 178-179, Asp-187, and 211-213 each bind ATP; these read EY and RSN. Residues Asp-248, Glu-260, and Asn-262 each coordinate Mg(2+). Mn(2+) contacts are provided by Asp-248, Glu-260, and Asn-262.

This sequence belongs to the RimK family. It depends on Mg(2+) as a cofactor. Requires Mn(2+) as cofactor.

An L-glutamate ligase that catalyzes the ATP-dependent post-translational addition of glutamate residues to the C-terminus of ribosomal protein bS6 (RpsF). Is also able to catalyze the synthesis of poly-alpha-glutamate in vitro, via ATP hydrolysis from unprotected glutamate as substrate. The number of glutamate residues added to either RpsF or to poly-alpha-glutamate changes with pH. The polypeptide is Ribosomal protein bS6--L-glutamate ligase (Shigella dysenteriae serotype 1 (strain Sd197)).